We begin with the raw amino-acid sequence, 307 residues long: uncharacterized protein (307 aa).

This is an uncharacterized protein from Rickettsia conorii (strain ATCC VR-613 / Malish 7).